The sequence spans 270 residues: Tryptophan synthase alpha chain (270 aa).

Catalysis depends on proton acceptor residues Glu51 and Asp62.

This sequence belongs to the TrpA family. As to quaternary structure, tetramer of two alpha and two beta chains.

The catalysed reaction is (1S,2R)-1-C-(indol-3-yl)glycerol 3-phosphate + L-serine = D-glyceraldehyde 3-phosphate + L-tryptophan + H2O. It participates in amino-acid biosynthesis; L-tryptophan biosynthesis; L-tryptophan from chorismate: step 5/5. Functionally, the alpha subunit is responsible for the aldol cleavage of indoleglycerol phosphate to indole and glyceraldehyde 3-phosphate. The polypeptide is Tryptophan synthase alpha chain (Methanothermobacter thermautotrophicus (strain ATCC 29096 / DSM 1053 / JCM 10044 / NBRC 100330 / Delta H) (Methanobacterium thermoautotrophicum)).